Here is a 398-residue protein sequence, read N- to C-terminus: Acetate kinase (398 aa).

Residue Asn-7 coordinates Mg(2+). Lys-14 lines the ATP pocket. Residue Arg-91 participates in substrate binding. Catalysis depends on Asp-148, which acts as the Proton donor/acceptor. Residues 208–212 (HIGNG), 283–285 (DMR), and 331–335 (GVGEN) each bind ATP. Mg(2+) is bound at residue Glu-385.

It belongs to the acetokinase family. In terms of assembly, homodimer. Mg(2+) is required as a cofactor. Requires Mn(2+) as cofactor.

The protein resides in the cytoplasm. The catalysed reaction is acetate + ATP = acetyl phosphate + ADP. The protein operates within metabolic intermediate biosynthesis; acetyl-CoA biosynthesis; acetyl-CoA from acetate: step 1/2. Functionally, catalyzes the formation of acetyl phosphate from acetate and ATP. Can also catalyze the reverse reaction. This Porphyromonas gingivalis (strain ATCC BAA-308 / W83) protein is Acetate kinase.